The sequence spans 684 residues: Threonine--tRNA ligase (684 aa).

In terms of domain architecture, TGS spans 1–64 (MTAPNPSSLV…ESDTEVEPVA (64 aa)). The interval 261–567 (DHRKLGVELD…LTEHYAGAFP (307 aa)) is catalytic. Zn(2+) contacts are provided by Cys366, His417, and His544.

It belongs to the class-II aminoacyl-tRNA synthetase family. As to quaternary structure, homodimer. Zn(2+) serves as cofactor.

Its subcellular location is the cytoplasm. It carries out the reaction tRNA(Thr) + L-threonine + ATP = L-threonyl-tRNA(Thr) + AMP + diphosphate + H(+). In terms of biological role, catalyzes the attachment of threonine to tRNA(Thr) in a two-step reaction: L-threonine is first activated by ATP to form Thr-AMP and then transferred to the acceptor end of tRNA(Thr). Also edits incorrectly charged L-seryl-tRNA(Thr). The protein is Threonine--tRNA ligase of Mycobacteroides abscessus (strain ATCC 19977 / DSM 44196 / CCUG 20993 / CIP 104536 / JCM 13569 / NCTC 13031 / TMC 1543 / L948) (Mycobacterium abscessus).